We begin with the raw amino-acid sequence, 271 residues long: (21S)-21-acetoxyl-apo-melianone synthase SDR (271 aa).

The Proton donor role is filled by S150. The active-site Proton acceptor is the Y163. Catalysis depends on K167, which acts as the Proton donor/acceptor.

This sequence belongs to the short-chain dehydrogenases/reductases (SDR) family. As to expression, mainly expressed in petioles.

It carries out the reaction 21-O-acetyl-isomeliandiol + A = (21S)-21-acetoxyl-apo-melianone + AH2. It participates in secondary metabolite biosynthesis; terpenoid biosynthesis. Its function is as follows. Oxidoreductase involved in the biosynthesis of limonoids triterpene natural products such as azadirachtin, an antifeedant widely used as bioinsecticide, and possessing many medicinal applications including anti-tumoral, anti-malarial, anti-rheumatic, antibacterial, anti-inflammatory, anti-pyretic and diuretic effects. Catalyzes the oxidation of 21-O-acetyl-isomeliandiol to (21S)-21-acetoxyl-apo-melianone. The polypeptide is (21S)-21-acetoxyl-apo-melianone synthase SDR (Melia azedarach (Chinaberry tree)).